The sequence spans 74 residues: Peptide ToAP4 (74 aa).

A signal peptide spans 1-22; sequence MQIKHLITLFFLVLIVADQCSA. Lys-39 is modified (lysine amide). A propeptide spanning residues 40–74 is cleaved from the precursor; sequence GGRRKREIAAQIEQYRDLQKREAELEELLDRLPMF.

It belongs to the non-disulfide-bridged peptide (NDBP) superfamily. Short antimicrobial peptide (group 4) family. In terms of tissue distribution, expressed by the venom gland.

The protein localises to the secreted. In terms of biological role, shows anti-inflammatory activities, since it decreases release of pro-inflammatory cytokines, and increases release of anti-inflammatory cytokines. Acts by blocking the Toll-like receptor 4 (TLR4). Also increases MHC-II expression in LPS-stimulated cells. Does not show antibacterial activity on Mycobacterium abscessus subsp. massiliense. Does not show antifungal activity. Has low hemolytic activity on human erythrocyte and low monocyte cytotoxicity. In vivo, does not induce immune cell migration. Helical wheel projections predict an amphipathic peptide with distinct hydrophobic and hydrophilic faces. The sequence is that of Peptide ToAP4 from Tityus obscurus (Amazonian scorpion).